A 255-amino-acid chain; its full sequence is Wtf element wtf15 (255 aa).

A disordered region spans residues 19-78 (KAGHEIDLEGSPPSEHNSEEKSTLPSNSDILTSANPVSQASETPDHSIESNTGSTQSPTS). Polar residues-rich tracts occupy residues 41-60 (TLPSNSDILTSANPVSQASE) and 67-78 (ESNTGSTQSPTS). A run of 4 helical transmembrane segments spans residues 85-105 (FSFCIVYYSYFAIVVLGCVLP), 112-132 (FLIAFLVIFGIISVILFSGSI), 162-182 (FLKTFVFYGLLKTIEHFLVLL), and 187-208 (WGWKCSTLSSILTPVSCISFCL).

This sequence belongs to the WTF family.

The protein resides in the spore membrane. Its function is as follows. May act in meiotic drive. This chain is Wtf element wtf15, found in Schizosaccharomyces pombe (strain 972 / ATCC 24843) (Fission yeast).